The following is a 523-amino-acid chain: Arabinose import ATP-binding protein AraG (523 aa).

2 ABC transporter domains span residues 20 to 255 and 268 to 511; these read LAFR…MVGR and IGSE…MLRT. 52–59 serves as a coordination point for ATP; the sequence is GENGAGKS.

It belongs to the ABC transporter superfamily. Arabinose importer (TC 3.A.1.2.2) family. The complex is composed of two ATP-binding proteins (AraG), two transmembrane proteins (AraH) and a solute-binding protein (AraF).

The protein localises to the cell inner membrane. The enzyme catalyses L-arabinose(out) + ATP + H2O = L-arabinose(in) + ADP + phosphate + H(+). Its function is as follows. Part of the ABC transporter complex AraFGH involved in arabinose import. Responsible for energy coupling to the transport system. This is Arabinose import ATP-binding protein AraG from Yersinia pestis bv. Antiqua (strain Antiqua).